The chain runs to 234 residues: MSLQTPTESPSSAPRLLVRQLGRRPYQPVWDAMKAFTDSRTPDTPDEFWVVEHDPVYTQGQAGKAEHLLAPGDIPVVQSDRGGQVTYHGPGQLVLYVLVDVRRSKLTVRELVTCLETAIINTLAKSGIEAYAKPDAPGVYVKNQLGAALQTEAKLASLGLRIRKGCSFHGLALNVNMDMTPFLRINPCGYAGMAMTQTSALGGPQSVAEAQAMLVAELASLIGYETITNTEEAA.

The BPL/LPL catalytic domain occupies proline 42–threonine 226. Substrate is bound by residues arginine 81–histidine 88, serine 157–glycine 159, and glycine 170–alanine 172. Cysteine 188 (acyl-thioester intermediate) is an active-site residue.

Belongs to the LipB family.

Its subcellular location is the cytoplasm. The catalysed reaction is octanoyl-[ACP] + L-lysyl-[protein] = N(6)-octanoyl-L-lysyl-[protein] + holo-[ACP] + H(+). It functions in the pathway protein modification; protein lipoylation via endogenous pathway; protein N(6)-(lipoyl)lysine from octanoyl-[acyl-carrier-protein]: step 1/2. Functionally, catalyzes the transfer of endogenously produced octanoic acid from octanoyl-acyl-carrier-protein onto the lipoyl domains of lipoate-dependent enzymes. Lipoyl-ACP can also act as a substrate although octanoyl-ACP is likely to be the physiological substrate. The chain is Octanoyltransferase from Aeromonas hydrophila subsp. hydrophila (strain ATCC 7966 / DSM 30187 / BCRC 13018 / CCUG 14551 / JCM 1027 / KCTC 2358 / NCIMB 9240 / NCTC 8049).